The chain runs to 122 residues: Double-headed protease inhibitor, submandibular gland (122 aa).

Kazal-like domains follow at residues 10–70 and 71–121; these read GGRK…ECDI and ECTQ…QCQS. 6 disulfides stabilise this stretch: cysteine 16–cysteine 50, cysteine 28–cysteine 47, cysteine 36–cysteine 68, cysteine 72–cysteine 101, cysteine 79–cysteine 98, and cysteine 87–cysteine 119.

The protein localises to the secreted. This inhibitor is composed of two homologous actively inhibiting halves: one which inhibits trypsin, the other which inhibits elastase. This Martes martes (European pine marten) protein is Double-headed protease inhibitor, submandibular gland.